Consider the following 574-residue polypeptide: Cell division cycle 7-related protein kinase (574 aa).

S27 bears the Phosphoserine mark. The Protein kinase domain occupies 58–574 (FKIEDKIGEG…LHPFFKDMSL (517 aa)). Residues 64 to 72 (IGEGTFSSV) and K90 contribute to the ATP site. D177 serves as the catalytic Proton acceptor. A Glycyl lysine isopeptide (Lys-Gly) (interchain with G-Cter in SUMO2) cross-link involves residue K268. T503 bears the Phosphothreonine mark.

It belongs to the protein kinase superfamily. Ser/Thr protein kinase family. CDC7 subfamily. Forms a complex with either DBF4/DBF4A or DBF4B, leading to the activation of the kinase activity. Interacts with CLASPIN (via the acidic patch); the interaction is required for phosphorylation of MCM proteins and CLASPIN. It depends on Mg(2+) as a cofactor.

The protein localises to the nucleus. The catalysed reaction is L-seryl-[protein] + ATP = O-phospho-L-seryl-[protein] + ADP + H(+). The enzyme catalyses L-threonyl-[protein] + ATP = O-phospho-L-threonyl-[protein] + ADP + H(+). Kinase involved in initiation of DNA replication. Phosphorylates critical substrates that regulate the G1/S phase transition and initiation of DNA replication, such as MCM proteins and CLASPIN. In Homo sapiens (Human), this protein is Cell division cycle 7-related protein kinase.